The sequence spans 398 residues: 1-deoxy-D-xylulose 5-phosphate reductoisomerase (398 aa).

NADPH contacts are provided by threonine 13, glycine 14, serine 15, isoleucine 16, arginine 40, and asparagine 127. A 1-deoxy-D-xylulose 5-phosphate-binding site is contributed by lysine 128. Glutamate 129 lines the NADPH pocket. Aspartate 153 contacts Mn(2+). Positions 154, 155, 188, and 211 each coordinate 1-deoxy-D-xylulose 5-phosphate. Mn(2+) is bound at residue glutamate 155. Glycine 217 provides a ligand contact to NADPH. 4 residues coordinate 1-deoxy-D-xylulose 5-phosphate: serine 224, asparagine 229, lysine 230, and glutamate 233. Position 233 (glutamate 233) interacts with Mn(2+).

This sequence belongs to the DXR family. The cofactor is Mg(2+). Mn(2+) serves as cofactor.

The catalysed reaction is 2-C-methyl-D-erythritol 4-phosphate + NADP(+) = 1-deoxy-D-xylulose 5-phosphate + NADPH + H(+). It participates in isoprenoid biosynthesis; isopentenyl diphosphate biosynthesis via DXP pathway; isopentenyl diphosphate from 1-deoxy-D-xylulose 5-phosphate: step 1/6. Catalyzes the NADPH-dependent rearrangement and reduction of 1-deoxy-D-xylulose-5-phosphate (DXP) to 2-C-methyl-D-erythritol 4-phosphate (MEP). This Cellvibrio japonicus (strain Ueda107) (Pseudomonas fluorescens subsp. cellulosa) protein is 1-deoxy-D-xylulose 5-phosphate reductoisomerase.